A 2270-amino-acid chain; its full sequence is Protein DOP1B (2270 aa).

3 disordered regions span residues 548-572 (METPSSDTDPLKESENNPAPEVEGE), 697-716 (LKQRSEQSPNKTTNKETEEE), and 1084-1145 (QEQD…DMPR). The segment covering 1095-1145 (ADTSTGHNDSDNTSSFTPSSVDLSSDQNYRDNTAGQVTHKNTGQQNMDMPR) has biased composition (polar residues).

This sequence belongs to the DOP1 family.

The protein resides in the golgi apparatus membrane. In terms of biological role, may be involved in protein traffic between late Golgi and early endosomes. This Xenopus laevis (African clawed frog) protein is Protein DOP1B (dop1b).